We begin with the raw amino-acid sequence, 718 residues long: Pentatricopeptide repeat-containing protein At1g22960, mitochondrial (718 aa).

Residues 1–11 constitute a mitochondrion transit peptide; the sequence is MILCLRLCLRA. PPR repeat units follow at residues 167-201, 202-236, 237-271, 272-306, 307-341, 342-372, 373-407, 408-442, 443-477, 478-512, 514-548, 549-583, 584-618, 619-653, and 654-688; these read ALKL…GFLP, SVRN…GIMP, TVIT…NIEF, SEVT…GFAV, TPYS…GIYP, TTST…MAAP, DVVS…DIHP, SIVT…LIFP, DVIT…GIKP, DGYA…DHHA, DLTI…GLVP, DHVT…RLYP, SVIT…GVRP, NVMT…GIPP, and NKYS…EIEP.

The protein belongs to the PPR family. P subfamily.

It localises to the mitochondrion. This chain is Pentatricopeptide repeat-containing protein At1g22960, mitochondrial, found in Arabidopsis thaliana (Mouse-ear cress).